The following is a 124-amino-acid chain: Ribonuclease pancreatic (124 aa).

The interval 1–24 (KETAAAKFQRQHMDSSTSSASSSN) is disordered. Lysine 7 and arginine 10 together coordinate substrate. The active-site Proton acceptor is histidine 12. Disulfide bonds link cysteine 26–cysteine 84, cysteine 40–cysteine 95, cysteine 58–cysteine 110, and cysteine 65–cysteine 72. Asparagine 34 carries N-linked (GlcNAc...) asparagine; in river-breed only glycosylation. Residues 41–45 (KPVNT), lysine 66, and arginine 85 each bind substrate. Residue histidine 119 is the Proton donor of the active site.

This sequence belongs to the pancreatic ribonuclease family. In terms of assembly, monomer. Interacts with and forms tight 1:1 complexes with RNH1. Dimerization of two such complexes may occur. Interaction with RNH1 inhibits this protein. Swamp breed ribonuclease do not bind carbohydrate, but there is evidence of a polymorphic form that does. In terms of tissue distribution, pancreas.

It localises to the secreted. It catalyses the reaction an [RNA] containing cytidine + H2O = an [RNA]-3'-cytidine-3'-phosphate + a 5'-hydroxy-ribonucleotide-3'-[RNA].. It carries out the reaction an [RNA] containing uridine + H2O = an [RNA]-3'-uridine-3'-phosphate + a 5'-hydroxy-ribonucleotide-3'-[RNA].. In terms of biological role, endonuclease that catalyzes the cleavage of RNA on the 3' side of pyrimidine nucleotides. Acts on single-stranded and double-stranded RNA. The sequence is that of Ribonuclease pancreatic (RNASE1) from Bubalus bubalis (Domestic water buffalo).